Here is a 123-residue protein sequence, read N- to C-terminus: Alpha-lactalbumin (123 aa).

Positions 1–123 (KQFTKCELSQ…KLEQWLCEKE (123 aa)) constitute a C-type lysozyme domain. 4 cysteine pairs are disulfide-bonded: C6–C120, C28–C111, C61–C77, and C73–C91. Residue N45 is glycosylated (N-linked (GlcNAc...) asparagine). Residues K79, D82, D84, D87, and D88 each coordinate Ca(2+).

This sequence belongs to the glycosyl hydrolase 22 family. As to quaternary structure, lactose synthase (LS) is a heterodimer of a catalytic component, beta1,4-galactosyltransferase (beta4Gal-T1) and a regulatory component, alpha-lactalbumin (LA). As to expression, mammary gland specific. Secreted in milk.

The protein localises to the secreted. Its function is as follows. Regulatory subunit of lactose synthase, changes the substrate specificity of galactosyltransferase in the mammary gland making glucose a good acceptor substrate for this enzyme. This enables LS to synthesize lactose, the major carbohydrate component of milk. In other tissues, galactosyltransferase transfers galactose onto the N-acetylglucosamine of the oligosaccharide chains in glycoproteins. The protein is Alpha-lactalbumin (LALBA) of Papio cynocephalus (Yellow baboon).